The following is a 380-amino-acid chain: Glycogenin-2 (380 aa).

L10, Y16, and R95 together coordinate UDP. UDP-alpha-D-glucose contacts are provided by L10, Y16, R95, K104, D120, A121, D122, N158, T159, D185, D188, and Q189. D120, A121, and D122 together coordinate UDP. A Mn(2+)-binding site is contributed by D120. D122 lines the Mn(2+) pocket. Y230 and Y232 each carry an O-linked (Glc...) tyrosine glycan. Residues H249, G252, and K255 each contribute to the UDP site. H249 lines the Mn(2+) pocket. The UDP-alpha-D-glucose site is built by G252 and K255. Positions 331–357 (SVDRNASQKSTAEKHDIEKPTSKPQSA) are disordered. Residues 341-351 (TAEKHDIEKPT) are compositionally biased toward basic and acidic residues. Y367 is a glycosylation site (O-linked (Glc...) tyrosine).

This sequence belongs to the glycosyltransferase 8 family. Glycogenin subfamily. As to quaternary structure, interacts with glycogen synthase GSY2. Mn(2+) is required as a cofactor.

The protein resides in the cytoplasm. The protein localises to the vacuole. The catalysed reaction is L-tyrosyl-[glycogenin] + UDP-alpha-D-glucose = alpha-D-glucosyl-L-tyrosyl-[glycogenin] + UDP + H(+). It carries out the reaction [1,4-alpha-D-glucosyl](n)-L-tyrosyl-[glycogenin] + UDP-alpha-D-glucose = [1,4-alpha-D-glucosyl](n+1)-L-tyrosyl-[glycogenin] + UDP + H(+). Functionally, self-glucosylating initiator of glycogen synthesis. It catalyzes the formation of a short alpha (1,4)-glucosyl chain covalently attached via a glucose 1-O-tyrosyl linkage to internal tyrosine residues and these chains act as primers for the elongation reaction catalyzed by glycogen synthase. Capable of transferring glucosyl residues to unbound acceptors such as free oligoglucans or oligoglucan derivatives. This Saccharomyces cerevisiae (strain YJM789) (Baker's yeast) protein is Glycogenin-2 (GLG2).